A 360-amino-acid polypeptide reads, in one-letter code: Photosystem II protein D1 (360 aa).

3 consecutive transmembrane segments (helical) span residues 29 to 46, 118 to 133, and 142 to 156; these read YIGW…TATS, HFLT…EWEL, and WISV…AAAA. H118 is a chlorophyll a binding site. Y126 is a pheophytin a binding site. D170 and E189 together coordinate [CaMn4O5] cluster. A helical transmembrane segment spans residues 197 to 218; the sequence is FHQLGVAGVFGGSLFSAMHGSL. A chlorophyll a-binding site is contributed by H198. Residues H215 and 264–265 contribute to the a quinone site; that span reads SF. Residue H215 participates in Fe cation binding. H272 contacts Fe cation. A helical transmembrane segment spans residues 274-288; it reads FLGLWPVVGIWLTAL. The [CaMn4O5] cluster site is built by H332, E333, D342, and A344. The propeptide occupies 345 to 360; sequence SGESLPVALTAPAVNG.

The protein belongs to the reaction center PufL/M/PsbA/D family. In terms of assembly, PSII is composed of 1 copy each of membrane proteins PsbA, PsbB, PsbC, PsbD, PsbE, PsbF, PsbH, PsbI, PsbJ, PsbK, PsbL, PsbM, PsbT, PsbX, PsbY, PsbZ, Psb30/Ycf12, at least 3 peripheral proteins of the oxygen-evolving complex and a large number of cofactors. It forms dimeric complexes. Requires The D1/D2 heterodimer binds P680, chlorophylls that are the primary electron donor of PSII, and subsequent electron acceptors. It shares a non-heme iron and each subunit binds pheophytin, quinone, additional chlorophylls, carotenoids and lipids. D1 provides most of the ligands for the Mn4-Ca-O5 cluster of the oxygen-evolving complex (OEC). There is also a Cl(-1) ion associated with D1 and D2, which is required for oxygen evolution. The PSII complex binds additional chlorophylls, carotenoids and specific lipids. as cofactor. In terms of processing, tyr-161 forms a radical intermediate that is referred to as redox-active TyrZ, YZ or Y-Z. Post-translationally, C-terminally processed by CTPA; processing is essential to allow assembly of the oxygen-evolving complex and thus photosynthetic growth.

It is found in the plastid. It localises to the chloroplast thylakoid membrane. The catalysed reaction is 2 a plastoquinone + 4 hnu + 2 H2O = 2 a plastoquinol + O2. Its function is as follows. Photosystem II (PSII) is a light-driven water:plastoquinone oxidoreductase that uses light energy to abstract electrons from H(2)O, generating O(2) and a proton gradient subsequently used for ATP formation. It consists of a core antenna complex that captures photons, and an electron transfer chain that converts photonic excitation into a charge separation. The D1/D2 (PsbA/PsbD) reaction center heterodimer binds P680, the primary electron donor of PSII as well as several subsequent electron acceptors. The chain is Photosystem II protein D1 from Porphyra purpurea (Red seaweed).